The following is a 152-amino-acid chain: Adrenodoxin-like protein 2, mitochondrial (152 aa).

A mitochondrion-targeting transit peptide spans 1 to 29 (MLVINSCRAASRLALRSLNLRSPIATRTF). The 2Fe-2S ferredoxin-type domain maps to 41–146 (VNITFVRANG…GLEVHVPSTI (106 aa)). Positions 80, 86, 89, and 127 each coordinate [2Fe-2S] cluster.

The protein belongs to the adrenodoxin/putidaredoxin family. It depends on [2Fe-2S] cluster as a cofactor.

It is found in the mitochondrion. Functionally, required for ecdysteroidogenesis in the prothoracic gland which is necessary for larval to pupal transition. This chain is Adrenodoxin-like protein 2, mitochondrial, found in Drosophila melanogaster (Fruit fly).